The chain runs to 455 residues: Serine--tRNA ligase (455 aa).

252 to 254 (TAE) contributes to the L-serine binding site. Residues 283 to 285 (RKE) and V299 contribute to the ATP site. E306 provides a ligand contact to L-serine. 370–373 (EVVS) contacts ATP. An L-serine-binding site is contributed by T406.

The protein belongs to the class-II aminoacyl-tRNA synthetase family. Type-1 seryl-tRNA synthetase subfamily. Homodimer. The tRNA molecule binds across the dimer.

It localises to the cytoplasm. The catalysed reaction is tRNA(Ser) + L-serine + ATP = L-seryl-tRNA(Ser) + AMP + diphosphate + H(+). It catalyses the reaction tRNA(Sec) + L-serine + ATP = L-seryl-tRNA(Sec) + AMP + diphosphate + H(+). It participates in aminoacyl-tRNA biosynthesis; selenocysteinyl-tRNA(Sec) biosynthesis; L-seryl-tRNA(Sec) from L-serine and tRNA(Sec): step 1/1. Functionally, catalyzes the attachment of serine to tRNA(Ser). Is also able to aminoacylate tRNA(Sec) with serine, to form the misacylated tRNA L-seryl-tRNA(Sec), which will be further converted into selenocysteinyl-tRNA(Sec). The polypeptide is Serine--tRNA ligase (Pyrococcus abyssi (strain GE5 / Orsay)).